The sequence spans 343 residues: 4-hydroxy-2-oxovalerate aldolase 2 (343 aa).

Positions 8-260 (ITVHDMSLRD…ETGVDVFAIS (253 aa)) constitute a Pyruvate carboxyltransferase domain. Residue 16–17 (RD) participates in substrate binding. Asp-17 contributes to the Mn(2+) binding site. Residue His-20 is the Proton acceptor of the active site. 2 residues coordinate substrate: Ser-170 and His-199. His-199 and His-201 together coordinate Mn(2+). Tyr-290 contacts substrate.

It belongs to the 4-hydroxy-2-oxovalerate aldolase family.

It catalyses the reaction (S)-4-hydroxy-2-oxopentanoate = acetaldehyde + pyruvate. This is 4-hydroxy-2-oxovalerate aldolase 2 from Burkholderia lata (strain ATCC 17760 / DSM 23089 / LMG 22485 / NCIMB 9086 / R18194 / 383).